Consider the following 156-residue polypeptide: MPRKGPAPKRPLVNDPVYGSQLVTQLVNKVLLDGKKSLAERIVYGALEQARDKTGTDPVVTLKRALDNVKPALEVRSRRVGGATYQVPVEVRPDRSVTLALRWLVSFSKARREKTMVERLANEILDASNGLGAAVKRREDTHKMAEANRAFAHYRW.

The protein belongs to the universal ribosomal protein uS7 family. In terms of assembly, part of the 30S ribosomal subunit. Contacts proteins S9 and S11.

In terms of biological role, one of the primary rRNA binding proteins, it binds directly to 16S rRNA where it nucleates assembly of the head domain of the 30S subunit. Is located at the subunit interface close to the decoding center, probably blocks exit of the E-site tRNA. This is Small ribosomal subunit protein uS7 from Mycobacterium sp. (strain JLS).